The sequence spans 122 residues: Large ribosomal subunit protein uL14c (122 aa).

The protein belongs to the universal ribosomal protein uL14 family. In terms of assembly, part of the 50S ribosomal subunit.

It localises to the plastid. Its subcellular location is the chloroplast. Binds to 23S rRNA. The polypeptide is Large ribosomal subunit protein uL14c (Jasminum nudiflorum (Winter jasmine)).